Here is a 185-residue protein sequence, read N- to C-terminus: Monothiol glutaredoxin-S4, mitochondrial (185 aa).

The transit peptide at 1 to 36 (MARLMSSALIRGLVRSSCSPTVAAVAQPTIHQFRNY) directs the protein to the mitochondrion. Positions 37-74 (SSGLGGDSTATGDSSSTRVAADPDTHQDFQPTTKSSNM) are disordered. Over residues 43–53 (DSTATGDSSST) the composition is skewed to low complexity. Polar residues predominate over residues 64–74 (DFQPTTKSSNM). Positions 77 to 179 (DDIVSQDIKE…DVLGDIAQKR (103 aa)) constitute a Glutaredoxin domain. Lys-94 serves as a coordination point for glutathione. A [2Fe-2S] cluster-binding site is contributed by Cys-102. Residues Lys-131, Phe-143, and 156–157 (SD) contribute to the glutathione site.

This sequence belongs to the glutaredoxin family. CGFS subfamily.

It is found in the mitochondrion. Its function is as follows. May only reduce GSH-thiol disulfides, but not protein disulfides. The protein is Monothiol glutaredoxin-S4, mitochondrial (GRXS4) of Oryza sativa subsp. japonica (Rice).